The chain runs to 365 residues: Histidine biosynthesis bifunctional protein HisB (365 aa).

Residues Met-1 to Pro-176 form a histidinol-phosphatase region. The active-site Nucleophile is the Asp-10. Mg(2+)-binding residues include Asp-10 and Asp-12. Asp-12 functions as the Proton donor in the catalytic mechanism. Zn(2+)-binding residues include Cys-93, His-95, Cys-101, and Cys-103. Mg(2+) is bound at residue Asp-130. The imidazoleglycerol-phosphate dehydratase stretch occupies residues Arg-177–Leu-365.

This sequence in the N-terminal section; belongs to the histidinol-phosphatase family. In the C-terminal section; belongs to the imidazoleglycerol-phosphate dehydratase family. It depends on Mg(2+) as a cofactor. Requires Zn(2+) as cofactor.

It localises to the cytoplasm. It carries out the reaction D-erythro-1-(imidazol-4-yl)glycerol 3-phosphate = 3-(imidazol-4-yl)-2-oxopropyl phosphate + H2O. It catalyses the reaction L-histidinol phosphate + H2O = L-histidinol + phosphate. It participates in amino-acid biosynthesis; L-histidine biosynthesis; L-histidine from 5-phospho-alpha-D-ribose 1-diphosphate: step 6/9. Its pathway is amino-acid biosynthesis; L-histidine biosynthesis; L-histidine from 5-phospho-alpha-D-ribose 1-diphosphate: step 8/9. The protein is Histidine biosynthesis bifunctional protein HisB of Mannheimia succiniciproducens (strain KCTC 0769BP / MBEL55E).